The primary structure comprises 527 residues: METASGPQEKYQLITRNLQEVLGEDKLMAILKEREVKIYWGTATTGKPHVAYFVPMSKIADFLKAGCEVTILFADLHAYLDNMKAPWELLELRTRYYEHVIKAMLESIGVPLEKLKFIRGTDYQLSKEYTLDVYRLSSVVTQHDAKKAGAEVVKQVEHPLLSGLLYPGLQALDEEYLKVDAQFGGVDQRKIFTFAEKYLPSLGYAKRIHLMNPMVPGLTGSKMSSSEEDSKIDLLDRKEDVKKKLKKAFCEPGNIENNGVLSFIKHVLFPLKSEFVILREEKWGGNKTYTAYETLEKDFAEQVVHPGDLKNSVEAALNKLLDPIREKFNSPELKKLTNAAYPNPSKAKPAEKGTKNSEPETIVPSRLDIRVGKVVSVEKHPDADSLYVEKIDVGEPEPRTVVSGLVQFVPKEQLQDRLVVLLCNLKPQKMRGVESQGMVLCASSVGEPRQVEPLDPPAECCAGERVYVEGYEDGEPDDELKPKKKVFEKLQADFRISEDCIAQWKERNFLTKLGSISCKSLKGGSIS.

Y39 is an L-tyrosine binding site. The 'HIGH' region motif lies at 44 to 52 (TTGKPHVAY). L-tyrosine contacts are provided by Y166, Q170, D173, and Q188. Positions 222–226 (KMSSS) match the 'KMSKS' region motif. The Nuclear localization signal signature appears at 242-247 (KKKLKK). A disordered region spans residues 337 to 362 (TNAAYPNPSKAKPAEKGTKNSEPETI). The segment covering 348 to 358 (KPAEKGTKNSE) has biased composition (basic and acidic residues). The tRNA-binding domain maps to 363–467 (VPSRLDIRVG…AECCAGERVY (105 aa)).

The protein belongs to the class-I aminoacyl-tRNA synthetase family. In terms of assembly, homodimer.

It localises to the cytoplasm. The protein resides in the nucleus. It catalyses the reaction tRNA(Tyr) + L-tyrosine + ATP = L-tyrosyl-tRNA(Tyr) + AMP + diphosphate + H(+). Its function is as follows. Catalyzes the attachment of tyrosine to tRNA(Tyr) in a two-step reaction: tyrosine is first activated by ATP to form Tyr-AMP and then transferred to the acceptor end of tRNA(Tyr). This Gallus gallus (Chicken) protein is Tyrosine--tRNA ligase, cytoplasmic (YARS1).